The following is a 462-amino-acid chain: Cysteine--tRNA ligase (462 aa).

C29 serves as a coordination point for Zn(2+). The short motif at 31-41 (PTVYDHAHIGN) is the 'HIGH' region element. Zn(2+)-binding residues include C214, H239, and E243. The 'KMSKS' region motif lies at 272–276 (KMSKS). K275 lines the ATP pocket.

The protein belongs to the class-I aminoacyl-tRNA synthetase family. As to quaternary structure, monomer. Zn(2+) is required as a cofactor.

It localises to the cytoplasm. It catalyses the reaction tRNA(Cys) + L-cysteine + ATP = L-cysteinyl-tRNA(Cys) + AMP + diphosphate. The protein is Cysteine--tRNA ligase of Azorhizobium caulinodans (strain ATCC 43989 / DSM 5975 / JCM 20966 / LMG 6465 / NBRC 14845 / NCIMB 13405 / ORS 571).